We begin with the raw amino-acid sequence, 64 residues long: Large ribosomal subunit protein bL28 (64 aa).

The tract at residues 1–23 (MSKECYFTGRKTVSSNNRSHAMN) is disordered. Residues 11–23 (KTVSSNNRSHAMN) show a composition bias toward polar residues.

Belongs to the bacterial ribosomal protein bL28 family.

In Lactococcus lactis subsp. cremoris (strain SK11), this protein is Large ribosomal subunit protein bL28.